The following is a 413-amino-acid chain: SET and MYND domain-containing protein DDB_G0273591 (413 aa).

One can recognise an SET domain in the interval 6 to 311 (DGLKLSNSEL…KGDQINISYL (306 aa)). An MYND-type zinc finger spans residues 51–95 (CYNCIKLIKSPSPQQVPRCFGCNEVWYCSEKCKQDNQAKHQHYEC). Positions 205-232 (DNNNNNNNNNNNNNNNNNNNNNNNNNNN) are disordered. Residues 216–243 (NNNNNNNNNNNNNNNNNNNIEELIKLIR) are a coiled coil.

It belongs to the class V-like SAM-binding methyltransferase superfamily.

Its function is as follows. Probable methyltransferase. This chain is SET and MYND domain-containing protein DDB_G0273591, found in Dictyostelium discoideum (Social amoeba).